The following is a 394-amino-acid chain: Elongation factor Tu (394 aa).

Residues 10-204 enclose the tr-type G domain; that stretch reads KPHVNVGTIG…ALDSYIPTPE (195 aa). Positions 19 to 26 are G1; sequence GHVDHGKT. 19 to 26 serves as a coordination point for GTP; it reads GHVDHGKT. T26 lines the Mg(2+) pocket. The segment at 60–64 is G2; that stretch reads GITIN. The G3 stretch occupies residues 81-84; it reads DCPG. Residues 81 to 85 and 136 to 139 each bind GTP; these read DCPGH and NKCD. The tract at residues 136–139 is G4; that stretch reads NKCD. Positions 174–176 are G5; it reads SAL.

This sequence belongs to the TRAFAC class translation factor GTPase superfamily. Classic translation factor GTPase family. EF-Tu/EF-1A subfamily. Monomer.

The protein localises to the cytoplasm. It carries out the reaction GTP + H2O = GDP + phosphate + H(+). GTP hydrolase that promotes the GTP-dependent binding of aminoacyl-tRNA to the A-site of ribosomes during protein biosynthesis. The polypeptide is Elongation factor Tu (Neisseria meningitidis serogroup A / serotype 4A (strain DSM 15465 / Z2491)).